We begin with the raw amino-acid sequence, 424 residues long: Enolase (424 aa).

Residue glutamine 162 coordinates (2R)-2-phosphoglycerate. Glutamate 204 serves as the catalytic Proton donor. Positions 241, 284, and 311 each coordinate Mg(2+). (2R)-2-phosphoglycerate is bound by residues lysine 336, arginine 365, serine 366, and lysine 387. Catalysis depends on lysine 336, which acts as the Proton acceptor.

This sequence belongs to the enolase family. Requires Mg(2+) as cofactor.

The protein resides in the cytoplasm. It is found in the secreted. Its subcellular location is the cell surface. It catalyses the reaction (2R)-2-phosphoglycerate = phosphoenolpyruvate + H2O. The protein operates within carbohydrate degradation; glycolysis; pyruvate from D-glyceraldehyde 3-phosphate: step 4/5. Its function is as follows. Catalyzes the reversible conversion of 2-phosphoglycerate (2-PG) into phosphoenolpyruvate (PEP). It is essential for the degradation of carbohydrates via glycolysis. This is Enolase from Rhizobium meliloti (strain 1021) (Ensifer meliloti).